Here is a 310-residue protein sequence, read N- to C-terminus: Carbamate kinase 1 (310 aa).

Belongs to the carbamate kinase family.

It is found in the cytoplasm. The enzyme catalyses hydrogencarbonate + NH4(+) + ATP = carbamoyl phosphate + ADP + H2O + H(+). The protein operates within metabolic intermediate metabolism; carbamoyl phosphate degradation; CO(2) and NH(3) from carbamoyl phosphate: step 1/1. The sequence is that of Carbamate kinase 1 (arcC1) from Staphylococcus aureus (strain bovine RF122 / ET3-1).